A 65-amino-acid chain; its full sequence is Large ribosomal subunit protein bL35 (65 aa).

Belongs to the bacterial ribosomal protein bL35 family.

This chain is Large ribosomal subunit protein bL35, found in Yersinia pseudotuberculosis serotype O:1b (strain IP 31758).